The sequence spans 1040 residues: Multidrug resistance protein MdtB (1040 aa).

12 helical membrane passes run 16–36 (FIMR…AGII), 347–367 (LMMA…NIPA), 369–389 (IIPG…MVFL), 396–416 (LTLM…IVVI), 440–460 (IGFT…PLLF), 472–492 (FAIT…TLTP), 537–557 (WLTL…WVFI), 863–883 (LGST…VLGI), 888–908 (FIHP…ALLA), 911–931 (IAGS…IGIV), 968–988 (ILMT…STGV), and 998–1018 (IGMV…TPVI).

This sequence belongs to the resistance-nodulation-cell division (RND) (TC 2.A.6) family. MdtB subfamily. As to quaternary structure, part of a tripartite efflux system composed of MdtA, MdtB and MdtC. MdtB forms a heteromultimer with MdtC.

It localises to the cell inner membrane. In terms of biological role, the MdtABC tripartite complex confers resistance against novobiocin and deoxycholate. This chain is Multidrug resistance protein MdtB, found in Escherichia coli O7:K1 (strain IAI39 / ExPEC).